The chain runs to 191 residues: Protein YceI (191 aa).

A signal peptide spans methionine 1 to alanine 22.

This sequence belongs to the UPF0312 family. Type 1 subfamily.

It localises to the periplasm. In Shigella flexneri, this protein is Protein YceI.